The primary structure comprises 576 residues: Formate--tetrahydrofolate ligase 1 (576 aa).

69-76 (TPLGEGKT) lines the ATP pocket.

The protein belongs to the formate--tetrahydrofolate ligase family.

The enzyme catalyses (6S)-5,6,7,8-tetrahydrofolate + formate + ATP = (6R)-10-formyltetrahydrofolate + ADP + phosphate. It participates in one-carbon metabolism; tetrahydrofolate interconversion. In Rubrobacter xylanophilus (strain DSM 9941 / JCM 11954 / NBRC 16129 / PRD-1), this protein is Formate--tetrahydrofolate ligase 1.